We begin with the raw amino-acid sequence, 184 residues long: MKAFLKILMVLIFVSVAYAKSPPTLSKEEEVLQHLQSFSAHFKQVLKNEKPLVYYGVLKAKAPNWALWVYEKPLKKEIYMNDKEVVIYEPNLFQATITPLKDKTDFFTILKRLKKQDDGSFKTTINKTTYRLVFKDGKPFSLEFKDGMNNLVTITFSQAEINPTIADEIFVFKPKDENIDIVRQ.

An N-terminal signal peptide occupies residues Met1 to Ala19.

It belongs to the LolA family. As to quaternary structure, monomer.

It is found in the periplasm. Its function is as follows. Participates in the translocation of lipoproteins from the inner membrane to the outer membrane. Only forms a complex with a lipoprotein if the residue after the N-terminal Cys is not an aspartate (The Asp acts as a targeting signal to indicate that the lipoprotein should stay in the inner membrane). This chain is Outer-membrane lipoprotein carrier protein, found in Helicobacter pylori (strain P12).